The sequence spans 286 residues: Phosphonates import ATP-binding protein PhnC (286 aa).

In terms of domain architecture, ABC transporter spans 3–246 (FHLKQVTRRF…AVTEIYGTDS (244 aa)). Position 35–42 (35–42 (GRSGAGKS)) interacts with ATP.

It belongs to the ABC transporter superfamily. Phosphonates importer (TC 3.A.1.9.1) family. As to quaternary structure, the complex is composed of two ATP-binding proteins (PhnC), two transmembrane proteins (PhnE) and a solute-binding protein (PhnD).

Its subcellular location is the cell inner membrane. It carries out the reaction phosphonate(out) + ATP + H2O = phosphonate(in) + ADP + phosphate + H(+). Part of the ABC transporter complex PhnCDE involved in phosphonates import. Responsible for energy coupling to the transport system. The chain is Phosphonates import ATP-binding protein PhnC from Agrobacterium fabrum (strain C58 / ATCC 33970) (Agrobacterium tumefaciens (strain C58)).